A 338-amino-acid polypeptide reads, in one-letter code: Ferredoxin--NADP reductase (338 aa).

FAD is bound by residues Asp-38, Gln-46, Tyr-51, Val-91, Phe-125, Asp-291, and Thr-331.

The protein belongs to the ferredoxin--NADP reductase type 2 family. Homodimer. FAD is required as a cofactor.

The catalysed reaction is 2 reduced [2Fe-2S]-[ferredoxin] + NADP(+) + H(+) = 2 oxidized [2Fe-2S]-[ferredoxin] + NADPH. The sequence is that of Ferredoxin--NADP reductase from Orientia tsutsugamushi (strain Boryong) (Rickettsia tsutsugamushi).